A 173-amino-acid polypeptide reads, in one-letter code: Insertion element IS150 protein InsJ (173 aa).

This sequence belongs to the IS150/IS1296 orfA family.

This is Insertion element IS150 protein InsJ (insJ) from Escherichia coli (strain K12).